The primary structure comprises 197 residues: Cell division protein SepF (197 aa).

Positions 15–91 (DEEEVESPEE…PPSKSNGKNV (77 aa)) are disordered. The segment covering 22–31 (PEERQRRVVQ) has biased composition (basic and acidic residues). The span at 37–47 (TNNVQQNQPQQ) shows a compositional bias: low complexity. Composition is skewed to polar residues over residues 48-58 (SERSYSNQSKL) and 78-91 (RMNQ…GKNV).

Belongs to the SepF family. In terms of assembly, homodimer. Interacts with FtsZ.

The protein localises to the cytoplasm. Its function is as follows. Cell division protein that is part of the divisome complex and is recruited early to the Z-ring. Probably stimulates Z-ring formation, perhaps through the cross-linking of FtsZ protofilaments. Its function overlaps with FtsA. The polypeptide is Cell division protein SepF (Staphylococcus haemolyticus (strain JCSC1435)).